The chain runs to 258 residues: Thiazole synthase 2 (258 aa).

The active-site Schiff-base intermediate with DXP is the K97. Residues G158, 184–185, and 206–207 contribute to the 1-deoxy-D-xylulose 5-phosphate site; these read AG and NT.

This sequence belongs to the ThiG family. In terms of assembly, homotetramer. Forms heterodimers with either ThiH or ThiS.

The protein resides in the cytoplasm. The catalysed reaction is [ThiS sulfur-carrier protein]-C-terminal-Gly-aminoethanethioate + 2-iminoacetate + 1-deoxy-D-xylulose 5-phosphate = [ThiS sulfur-carrier protein]-C-terminal Gly-Gly + 2-[(2R,5Z)-2-carboxy-4-methylthiazol-5(2H)-ylidene]ethyl phosphate + 2 H2O + H(+). It participates in cofactor biosynthesis; thiamine diphosphate biosynthesis. Catalyzes the rearrangement of 1-deoxy-D-xylulose 5-phosphate (DXP) to produce the thiazole phosphate moiety of thiamine. Sulfur is provided by the thiocarboxylate moiety of the carrier protein ThiS. In vitro, sulfur can be provided by H(2)S. In Syntrophotalea carbinolica (strain DSM 2380 / NBRC 103641 / GraBd1) (Pelobacter carbinolicus), this protein is Thiazole synthase 2.